The chain runs to 369 residues: Tryptophan 2,3-dioxygenase 2 (369 aa).

Substrate is bound by residues 36–40 (FIVVH) and Arg107. His303 serves as a coordination point for heme. Residue Thr317 coordinates substrate.

Belongs to the tryptophan 2,3-dioxygenase family. In terms of assembly, homotetramer. The cofactor is heme.

The enzyme catalyses L-tryptophan + O2 = N-formyl-L-kynurenine. The protein operates within amino-acid degradation; L-tryptophan degradation via kynurenine pathway; L-kynurenine from L-tryptophan: step 1/2. In terms of biological role, heme-dependent dioxygenase that catalyzes the oxidative cleavage of the L-tryptophan (L-Trp) pyrrole ring and converts L-tryptophan to N-formyl-L-kynurenine. Catalyzes the oxidative cleavage of the indole moiety. This Ralstonia nicotianae (strain ATCC BAA-1114 / GMI1000) (Ralstonia solanacearum) protein is Tryptophan 2,3-dioxygenase 2.